Reading from the N-terminus, the 814-residue chain is Glycogen phosphorylase (814 aa).

N6-(pyridoxal phosphate)lysine is present on lysine 662.

It belongs to the glycogen phosphorylase family. Pyridoxal 5'-phosphate is required as a cofactor.

It carries out the reaction [(1-&gt;4)-alpha-D-glucosyl](n) + phosphate = [(1-&gt;4)-alpha-D-glucosyl](n-1) + alpha-D-glucose 1-phosphate. Phosphorylase is an important allosteric enzyme in carbohydrate metabolism. Enzymes from different sources differ in their regulatory mechanisms and in their natural substrates. However, all known phosphorylases share catalytic and structural properties. The protein is Glycogen phosphorylase (glgP) of Chlamydia trachomatis serovar D (strain ATCC VR-885 / DSM 19411 / UW-3/Cx).